The chain runs to 339 residues: DNA-directed RNA polymerase subunit alpha (339 aa).

The interval 1-233 is alpha N-terminal domain (alpha-NTD); sequence MVREEVAGST…DLFLPFLHAE (233 aa). The alpha C-terminal domain (alpha-CTD) stretch occupies residues 266–339; sequence GIPLNCIFID…IDLLKNKLSF (74 aa).

Belongs to the RNA polymerase alpha chain family. In terms of assembly, in plastids the minimal PEP RNA polymerase catalytic core is composed of four subunits: alpha, beta, beta', and beta''. When a (nuclear-encoded) sigma factor is associated with the core the holoenzyme is formed, which can initiate transcription.

The protein localises to the plastid. Its subcellular location is the chloroplast. The enzyme catalyses RNA(n) + a ribonucleoside 5'-triphosphate = RNA(n+1) + diphosphate. Functionally, DNA-dependent RNA polymerase catalyzes the transcription of DNA into RNA using the four ribonucleoside triphosphates as substrates. In Psathyrostachys juncea (Russian wildrye), this protein is DNA-directed RNA polymerase subunit alpha.